A 122-amino-acid chain; its full sequence is Alkene monooxygenase system, ferredoxin component (122 aa).

In terms of domain architecture, Rieske spans 16–111; it reads VDVCAVDDLW…LKVEGGRVLI (96 aa). Residues cysteine 55, histidine 57, cysteine 75, and histidine 78 each contribute to the [2Fe-2S] cluster site.

The protein belongs to the bacterial ring-hydroxylating dioxygenase ferredoxin component family. In terms of assembly, homodimer. The alkene monooxygenase multicomponent enzyme system is composed of an electron transfer component and a monooxygenase component interacting with the effector protein XamoD. The electron transfer component is composed of a ferredoxin reductase (XamoF) and a ferredoxin (XamoC), and the monooxygenase component is formed by a heterohexamer (dimer of heterotrimers) of two alpha subunits (XamoA), two beta subunits (XamoE) and two gamma subunits (XamoB). It depends on [2Fe-2S] cluster as a cofactor.

The protein resides in the cytoplasm. Functionally, ferredoxin component of the alkene monooxygenase multicomponent enzyme system which catalyzes the O2- and NADH-dependent epoxidation of short chain (C2 to C6) alkenes to their corresponding epoxides. Functions as an intermediate electron transfer protein. In Xanthobacter autotrophicus (strain ATCC BAA-1158 / Py2), this protein is Alkene monooxygenase system, ferredoxin component.